A 726-amino-acid chain; its full sequence is WD repeat-containing and planar cell polarity effector protein fritz homolog (726 aa).

2 WD repeats span residues 305–343 (LRSK…TLLA) and 344–383 (QAEL…INIQ). Positions 642–660 (SSGSTPKHTIQQKIPNGPS) are enriched in polar residues. The interval 642–717 (SSGSTPKHTI…RRQDTEDVGS (76 aa)) is disordered. The span at 672-685 (MEETEEEEEEEEEA) shows a compositional bias: acidic residues. The segment covering 701-712 (GELREDHRRQDT) has biased composition (basic and acidic residues).

This sequence belongs to the WD repeat fritz family. As to quaternary structure, component of the CPLANE (ciliogenesis and planar polarity effectors) complex, composed of INTU, FUZ and WDPCP. Interacts with CPLANE1.

It localises to the cell membrane. It is found in the cytoplasm. Its subcellular location is the cytoskeleton. The protein resides in the cilium axoneme. The protein localises to the cilium basal body. Probable effector of the planar cell polarity signaling pathway which regulates the septin cytoskeleton in both ciliogenesis and collective cell movements. Together with FUZ and WDPCP proposed to function as core component of the CPLANE (ciliogenesis and planar polarity effectors) complex involved in the recruitment of peripheral IFT-A proteins to basal bodies. Binds phosphatidylinositol 3-phosphate with highest affinity, followed by phosphatidylinositol 4-phosphate and phosphatidylinositol 5-phosphate. The sequence is that of WD repeat-containing and planar cell polarity effector protein fritz homolog (Wdpcp) from Rattus norvegicus (Rat).